The primary structure comprises 968 residues: Sorting nexin-13 (968 aa).

A PXA domain is found at 97–284; it reads ANIIDEPLQQ…YVIWMIRDSN (188 aa). The RGS domain occupies 373 to 496; sequence PLDSILVDNV…RKVYELMLRD (124 aa). The 122-residue stretch at 570-691 folds into the PX domain; the sequence is YADYDPYAVA…DFLENKAYSK (122 aa). A 1,2-diacyl-sn-glycero-3-phospho-(1D-myo-inositol-3-phosphate)-binding residues include Arg612, Ser614, Lys639, and Arg653.

The protein belongs to the sorting nexin family.

Its subcellular location is the early endosome membrane. Functionally, may be involved in several stages of intracellular trafficking. May play a role in endosome homeostasis. Acts as a GAP for Galphas. This chain is Sorting nexin-13 (SNX13), found in Homo sapiens (Human).